The primary structure comprises 458 residues: Bifunctional protein GlmU (458 aa).

Residues 1-230 form a pyrophosphorylase region; that stretch reads MSLPTYSKLN…EWQVAGINSK (230 aa). UDP-N-acetyl-alpha-D-glucosamine is bound by residues 14–17, Lys28, Gln79, and 84–85; these read LAAG and GT. Asp108 is a binding site for Mg(2+). Residues Gly141, Glu155, Asn170, and Asn228 each coordinate UDP-N-acetyl-alpha-D-glucosamine. Asn228 lines the Mg(2+) pocket. The tract at residues 231 to 251 is linker; sequence QDLAALERVYQGRYAARLLAK. Positions 252-458 are N-acetyltransferase; the sequence is GVTLADPSRI…NWKRPEKVKK (207 aa). UDP-N-acetyl-alpha-D-glucosamine contacts are provided by Arg334 and Lys352. His364 serves as the catalytic Proton acceptor. UDP-N-acetyl-alpha-D-glucosamine contacts are provided by Tyr367 and Asn378. Acetyl-CoA contacts are provided by residues Ala381, 387–388, Ser406, Ala424, and Arg441; that span reads NY.

The protein in the N-terminal section; belongs to the N-acetylglucosamine-1-phosphate uridyltransferase family. It in the C-terminal section; belongs to the transferase hexapeptide repeat family. As to quaternary structure, homotrimer. Mg(2+) serves as cofactor.

Its subcellular location is the cytoplasm. The enzyme catalyses alpha-D-glucosamine 1-phosphate + acetyl-CoA = N-acetyl-alpha-D-glucosamine 1-phosphate + CoA + H(+). It catalyses the reaction N-acetyl-alpha-D-glucosamine 1-phosphate + UTP + H(+) = UDP-N-acetyl-alpha-D-glucosamine + diphosphate. It functions in the pathway nucleotide-sugar biosynthesis; UDP-N-acetyl-alpha-D-glucosamine biosynthesis; N-acetyl-alpha-D-glucosamine 1-phosphate from alpha-D-glucosamine 6-phosphate (route II): step 2/2. The protein operates within nucleotide-sugar biosynthesis; UDP-N-acetyl-alpha-D-glucosamine biosynthesis; UDP-N-acetyl-alpha-D-glucosamine from N-acetyl-alpha-D-glucosamine 1-phosphate: step 1/1. Its pathway is bacterial outer membrane biogenesis; LPS lipid A biosynthesis. In terms of biological role, catalyzes the last two sequential reactions in the de novo biosynthetic pathway for UDP-N-acetylglucosamine (UDP-GlcNAc). The C-terminal domain catalyzes the transfer of acetyl group from acetyl coenzyme A to glucosamine-1-phosphate (GlcN-1-P) to produce N-acetylglucosamine-1-phosphate (GlcNAc-1-P), which is converted into UDP-GlcNAc by the transfer of uridine 5-monophosphate (from uridine 5-triphosphate), a reaction catalyzed by the N-terminal domain. The protein is Bifunctional protein GlmU of Methylobacillus flagellatus (strain ATCC 51484 / DSM 6875 / VKM B-1610 / KT).